A 216-amino-acid polypeptide reads, in one-letter code: Elongation factor Ts (216 aa).

The involved in Mg(2+) ion dislocation from EF-Tu stretch occupies residues 81-84; the sequence is TDFV.

The protein belongs to the EF-Ts family.

It localises to the cytoplasm. Functionally, associates with the EF-Tu.GDP complex and induces the exchange of GDP to GTP. It remains bound to the aminoacyl-tRNA.EF-Tu.GTP complex up to the GTP hydrolysis stage on the ribosome. The sequence is that of Elongation factor Ts from Geobacter sulfurreducens (strain ATCC 51573 / DSM 12127 / PCA).